Here is a 791-residue protein sequence, read N- to C-terminus: MLLSFRRNRRSQFNHIIHGFLPAASIAPKPAVPRTPPPRSPNPSPERPRSALAAAILATTLTGQTVAIPQPRQRSRSESDASDIEKDSFIKPYATTSELRLRQSWQNEPRRTSLPSFEMLGYGEDEDAETQVSTSCRESESTWKDVGDGRDATYTVPHRDQVLPSQKLVRKDDAPQPDWLSDSSSSSSSSTPQHTQQKDVKHSVLNLEGEKVRLHEKPPPSPDVAGRIHQRYTEITKEKFAELKEETVHLYSANQALSCELSALRQAMKDLQLKLKLVEKDNRKLKETEKASCQEGVTPELLCLRKQSQDLVDENEGLKMIVHRLNVELSRYQTKFRPLSEEESSHIQGLPSKGPTPPWLVDIKYLSPLLLAYEDRMKEKDKLSTALEEEMKTFRLRVQEVVKENEALHQELTKRSPVTVEEWRQLQTQAELVLDENKLLIEQLEIQQAKARDTHQAHLQDVSKLTKQLVLLEAKTQGQEKQLVESTEQLESLQAKCTELKAQLDSKIAVDVHTSIVNELKSQLQKEEEKDSAEMEELMAKLTALQVQKKSLLLEKSSWATRNRALEAELERTRKANRRYQKRIDVLRKQVEKAMGKEMSAHQYLANLVGLAETVTKERDSLKYLAQCLESEKHGVLNKILKGNIRLGKLEERVKGYKKQAALKLGDIHHRLKEQQEDFAGKAAQYQKEVKHLHRMLQEKQEVLDEALQQKRNMEGELEMVLESTAKENRRMRSLLQATLERRSTQHVTAPPDTCLRRSSQGDLLIGHDFSYGDVQLLATTNRQSLGESMA.

Positions 27 to 203 (APKPAVPRTP…HTQQKDVKHS (177 aa)) are disordered. Residues 30 to 45 (PAVPRTPPPRSPNPSP) show a composition bias toward pro residues. Residue S50 is modified to Phosphoserine. Residues 50–62 (SALAAAILATTLT) show a composition bias toward low complexity. Positions 75-89 (SRSESDASDIEKDSF) are enriched in basic and acidic residues. Over residues 94-107 (ATTSELRLRQSWQN) the composition is skewed to polar residues. The segment covering 137 to 161 (RESESTWKDVGDGRDATYTVPHRDQ) has biased composition (basic and acidic residues). Residues 181–190 (SDSSSSSSSS) are compositionally biased toward low complexity. Coiled-coil stretches lie at residues 252–291 (SANQ…TEKA), 370–598 (LLAY…MGKE), and 670–737 (HRLK…SLLQ).

It is found in the cytoplasm. The protein localises to the cytosol. The protein resides in the cytoskeleton. Its subcellular location is the microtubule organizing center. It localises to the centrosome. It is found in the spindle pole. The protein localises to the centriole. The protein resides in the mitochondrion intermembrane space. In terms of biological role, required for ciliogenesis. Also plays a role in mitochondrial metabolism where it may modulate complex IV activity. This is Centrosomal protein of 89 kDa (Cep89) from Mus musculus (Mouse).